A 248-amino-acid polypeptide reads, in one-letter code: Carbohydrate deacetylase 2 (248 aa).

Mg(2+)-binding residues include H59 and H123.

This sequence belongs to the YdjC deacetylase family. In terms of assembly, homodimer. Requires Mg(2+) as cofactor.

Probably catalyzes the deacetylation of acetylated carbohydrates an important step in the degradation of oligosaccharides. The polypeptide is Carbohydrate deacetylase 2 (Listeria innocua serovar 6a (strain ATCC BAA-680 / CLIP 11262)).